A 303-amino-acid chain; its full sequence is ATP phosphoribosyltransferase (303 aa).

This sequence belongs to the ATP phosphoribosyltransferase family. Long subfamily. The cofactor is Mg(2+).

The protein localises to the cytoplasm. The catalysed reaction is 1-(5-phospho-beta-D-ribosyl)-ATP + diphosphate = 5-phospho-alpha-D-ribose 1-diphosphate + ATP. It participates in amino-acid biosynthesis; L-histidine biosynthesis; L-histidine from 5-phospho-alpha-D-ribose 1-diphosphate: step 1/9. Feedback inhibited by histidine. Catalyzes the condensation of ATP and 5-phosphoribose 1-diphosphate to form N'-(5'-phosphoribosyl)-ATP (PR-ATP). Has a crucial role in the pathway because the rate of histidine biosynthesis seems to be controlled primarily by regulation of HisG enzymatic activity. This Haemophilus influenzae (strain PittGG) protein is ATP phosphoribosyltransferase.